Consider the following 838-residue polypeptide: Protein translocase subunit SecA (838 aa).

ATP is bound by residues glutamine 87, 105–109 (GEGKT), and aspartate 494. Composition is skewed to basic and acidic residues over residues 781–790 (EQEFQHKDET) and 803–819 (EDAK…KVGR). A disordered region spans residues 781-838 (EQEFQHKDETANVQYSGPAESAEDAKKEPKRREAPKVGRNDPCPCGSGKKYKKCHGAK). Residues cysteine 823, cysteine 825, cysteine 834, and histidine 835 each contribute to the Zn(2+) site. Residues 829 to 838 (KKYKKCHGAK) are compositionally biased toward basic residues.

The protein belongs to the SecA family. As to quaternary structure, monomer and homodimer. Part of the essential Sec protein translocation apparatus which comprises SecA, SecYEG and auxiliary proteins SecDF-YajC and YidC. Zn(2+) is required as a cofactor.

The protein localises to the cell inner membrane. Its subcellular location is the cytoplasm. The enzyme catalyses ATP + H2O + cellular proteinSide 1 = ADP + phosphate + cellular proteinSide 2.. In terms of biological role, part of the Sec protein translocase complex. Interacts with the SecYEG preprotein conducting channel. Has a central role in coupling the hydrolysis of ATP to the transfer of proteins into and across the cell membrane, serving as an ATP-driven molecular motor driving the stepwise translocation of polypeptide chains across the membrane. This is Protein translocase subunit SecA from Solidesulfovibrio magneticus (strain ATCC 700980 / DSM 13731 / RS-1) (Desulfovibrio magneticus).